The following is a 245-amino-acid chain: Biosynthetic peptidoglycan transglycosylase (245 aa).

Residues 20-42 traverse the membrane as a helical segment; the sequence is VYAGSVFAGAWLATQLFYLVQIA.

It belongs to the glycosyltransferase 51 family.

The protein resides in the cell inner membrane. The enzyme catalyses [GlcNAc-(1-&gt;4)-Mur2Ac(oyl-L-Ala-gamma-D-Glu-L-Lys-D-Ala-D-Ala)](n)-di-trans,octa-cis-undecaprenyl diphosphate + beta-D-GlcNAc-(1-&gt;4)-Mur2Ac(oyl-L-Ala-gamma-D-Glu-L-Lys-D-Ala-D-Ala)-di-trans,octa-cis-undecaprenyl diphosphate = [GlcNAc-(1-&gt;4)-Mur2Ac(oyl-L-Ala-gamma-D-Glu-L-Lys-D-Ala-D-Ala)](n+1)-di-trans,octa-cis-undecaprenyl diphosphate + di-trans,octa-cis-undecaprenyl diphosphate + H(+). It functions in the pathway cell wall biogenesis; peptidoglycan biosynthesis. Peptidoglycan polymerase that catalyzes glycan chain elongation from lipid-linked precursors. This Burkholderia ambifaria (strain ATCC BAA-244 / DSM 16087 / CCUG 44356 / LMG 19182 / AMMD) (Burkholderia cepacia (strain AMMD)) protein is Biosynthetic peptidoglycan transglycosylase.